Consider the following 98-residue polypeptide: NADH-ubiquinone oxidoreductase chain 4L (98 aa).

3 helical membrane passes run 2 to 22 (PSIF…TLVF), 29 to 49 (SLLC…LIIL), and 61 to 81 (ILLL…LVMV).

The protein belongs to the complex I subunit 4L family. As to quaternary structure, core subunit of respiratory chain NADH dehydrogenase (Complex I) which is composed of 45 different subunits.

The protein resides in the mitochondrion inner membrane. It carries out the reaction a ubiquinone + NADH + 5 H(+)(in) = a ubiquinol + NAD(+) + 4 H(+)(out). Its function is as follows. Core subunit of the mitochondrial membrane respiratory chain NADH dehydrogenase (Complex I) which catalyzes electron transfer from NADH through the respiratory chain, using ubiquinone as an electron acceptor. Part of the enzyme membrane arm which is embedded in the lipid bilayer and involved in proton translocation. This Propithecus diadema diadema (Diademed sifaka) protein is NADH-ubiquinone oxidoreductase chain 4L (MT-ND4L).